A 387-amino-acid polypeptide reads, in one-letter code: Eukaryotic translation initiation factor 3 subunit M (387 aa).

The region spanning 181-340 is the PCI domain; it reads LSSKVMIELL…RKVHISSTMH (160 aa).

It belongs to the eIF-3 subunit M family. In terms of assembly, component of the eukaryotic translation initiation factor 3 (eIF-3) complex. The eIF-3 complex interacts with pix.

The protein resides in the cytoplasm. The protein localises to the golgi apparatus. Component of the eukaryotic translation initiation factor 3 (eIF-3) complex, which is involved in protein synthesis of a specialized repertoire of mRNAs and, together with other initiation factors, stimulates binding of mRNA and methionyl-tRNAi to the 40S ribosome. The eIF-3 complex specifically targets and initiates translation of a subset of mRNAs involved in cell proliferation. The polypeptide is Eukaryotic translation initiation factor 3 subunit M (Drosophila mojavensis (Fruit fly)).